The chain runs to 234 residues: UPF0173 metal-dependent hydrolase RHECIAT_CH0001941 (234 aa).

It belongs to the UPF0173 family.

The polypeptide is UPF0173 metal-dependent hydrolase RHECIAT_CH0001941 (Rhizobium etli (strain CIAT 652)).